A 536-amino-acid polypeptide reads, in one-letter code: CTP synthase (536 aa).

The tract at residues 1 to 268 (MSFKSIFLTG…VDFLLSKFGF (268 aa)) is amidoligase domain. Ser-14 serves as a coordination point for CTP. UTP is bound at residue Ser-14. An ATP-binding site is contributed by 15–20 (SLGKGL). Tyr-55 contacts L-glutamine. Asp-72 is an ATP binding site. Mg(2+) contacts are provided by Asp-72 and Glu-142. CTP contacts are provided by residues 149-151 (DIE), 188-193 (KTKPTQ), and Lys-224. UTP-binding positions include 188–193 (KTKPTQ) and Lys-224. The region spanning 294 to 532 (RIGLVGKYLE…LSAALDYSLE (239 aa)) is the Glutamine amidotransferase type-1 domain. Gly-353 is a binding site for L-glutamine. Residue Cys-380 is the Nucleophile; for glutamine hydrolysis of the active site. L-glutamine is bound by residues 381–384 (LGMQ), Glu-404, and Arg-460. Active-site residues include His-505 and Glu-507.

The protein belongs to the CTP synthase family. As to quaternary structure, homotetramer.

The enzyme catalyses UTP + L-glutamine + ATP + H2O = CTP + L-glutamate + ADP + phosphate + 2 H(+). It catalyses the reaction L-glutamine + H2O = L-glutamate + NH4(+). It carries out the reaction UTP + NH4(+) + ATP = CTP + ADP + phosphate + 2 H(+). Its pathway is pyrimidine metabolism; CTP biosynthesis via de novo pathway; CTP from UDP: step 2/2. Its activity is regulated as follows. Allosterically activated by GTP, when glutamine is the substrate; GTP has no effect on the reaction when ammonia is the substrate. The allosteric effector GTP functions by stabilizing the protein conformation that binds the tetrahedral intermediate(s) formed during glutamine hydrolysis. Inhibited by the product CTP, via allosteric rather than competitive inhibition. Functionally, catalyzes the ATP-dependent amination of UTP to CTP with either L-glutamine or ammonia as the source of nitrogen. Regulates intracellular CTP levels through interactions with the four ribonucleotide triphosphates. The sequence is that of CTP synthase from Chlamydia muridarum (strain MoPn / Nigg).